The following is a 689-amino-acid chain: Beta-adrenergic receptor kinase 1 (689 aa).

The interval 1 to 190 (MADLEAVLAD…ELNIHLTMND (190 aa)) is N-terminal. The region spanning 54 to 175 (TFEKIFSQKL…IESDKFTRFC (122 aa)) is the RGS domain. Residues 191 to 453 (FSVHRIIGRG…AQEIKESPFF (263 aa)) enclose the Protein kinase domain. ATP contacts are provided by residues 197–205 (IGRGGFGEV) and Lys220. Asp317 acts as the Proton acceptor in catalysis. The AGC-kinase C-terminal domain occupies 454–521 (RSLDWQMVFL…TISERWQQEV (68 aa)). One can recognise a PH domain in the interval 558-652 (DCIMHGYMSK…WKKELRDAYR (95 aa)). A Phosphoserine modification is found at Ser670.

This sequence belongs to the protein kinase superfamily. AGC Ser/Thr protein kinase family. GPRK subfamily. Interacts with the heterodimer formed by GNB1 and GNG2. Interacts with GIT1. Interacts with, and phosphorylates chemokine-stimulated CCR5. Interacts with ARRB1. Interacts with LPAR1 and LPAR2. Interacts with RALA in response to LPAR1 activation. ADRBK1 and RALA mutually inhibit each other's binding to LPAR1. Interacts with ADRB2. As to expression, expressed at low levels in brain cortex, hippocampus, striatum, hypothalamus, cerebellum and brainstem (at protein level).

It localises to the cytoplasm. It is found in the cell membrane. The protein localises to the postsynapse. The protein resides in the presynapse. It catalyses the reaction [beta-adrenergic receptor] + ATP = [beta-adrenergic receptor]-phosphate + ADP + H(+). With respect to regulation, in contrast to other AGC family kinases, the catalytic activity is solely regulated by the binding of substrates and ligands, not by phosphorylation of the kinase domain. Functionally, specifically phosphorylates the agonist-occupied form of the beta-adrenergic and closely related receptors, probably inducing a desensitization of them. Key regulator of LPAR1 signaling. Competes with RALA for binding to LPAR1 thus affecting the signaling properties of the receptor. Desensitizes LPAR1 and LPAR2 in a phosphorylation-independent manner. Positively regulates ciliary smoothened (SMO)-dependent Hedgehog (Hh) signaling pathway by facilitating the trafficking of SMO into the cilium and the stimulation of SMO activity. Inhibits relaxation of airway smooth muscle in response to blue light. The chain is Beta-adrenergic receptor kinase 1 from Rattus norvegicus (Rat).